The chain runs to 303 residues: Acidic endochitinase WIN6.2B (303 aa).

Residues Met1 to Ala21 form the signal peptide. Positions Glu22–Gly62 constitute a Chitin-binding type-1 domain. 4 cysteine pairs are disulfide-bonded: Cys24/Cys39, Cys33/Cys45, Cys38/Cys52, and Cys56/Cys60. A chitinase region spans residues Asp82–Met303. Glu150 (proton donor) is an active-site residue. Cys253 and Cys286 are oxidised to a cystine.

It belongs to the glycosyl hydrolase 19 family. Chitinase class I subfamily.

The enzyme catalyses Random endo-hydrolysis of N-acetyl-beta-D-glucosaminide (1-&gt;4)-beta-linkages in chitin and chitodextrins.. Defense against chitin-containing fungal pathogens. The sequence is that of Acidic endochitinase WIN6.2B from Populus trichocarpa (Western balsam poplar).